A 417-amino-acid polypeptide reads, in one-letter code: MTEKENLGGSTLLPAYFGEFGGQFVAESLLPALDQLEKAFVDATNSPEFREELGGYLRDYLGRPTPLTECSNLPLAGEGKGFARIFLKREDLVHGGAHKTNQVIGQVLLAKRMGKTRIIAETGAGQHGTATALACALMGLECVVYMGAKDVARQQPNVYRMQLHGAKVIPVESGSGTLKDAVNEALRDWTATFHESHYLLGTAAGPHPFPTIVREFHKVISEEAKAQMLERTGKLPDVVVACVGGGSNAIGMFADFIDDEGVELVGAEPAGEGLDSGKHGATITNGQIGILHGTRSYLMRNSDGQVEESYSISAGLDYPGVGPQHAHLHATGRATYVGITDAEALQAFQYLARYEGIIPALESSHAFAYALKRAKTAEEEGQNLTILVSLSGRGDKDVDHVRRTLEENPELILKDNR.

Lys-99 carries the post-translational modification N6-(pyridoxal phosphate)lysine.

It belongs to the TrpB family. Tetramer of two alpha and two beta chains. Requires pyridoxal 5'-phosphate as cofactor.

The enzyme catalyses (1S,2R)-1-C-(indol-3-yl)glycerol 3-phosphate + L-serine = D-glyceraldehyde 3-phosphate + L-tryptophan + H2O. Its pathway is amino-acid biosynthesis; L-tryptophan biosynthesis; L-tryptophan from chorismate: step 5/5. Its function is as follows. The beta subunit is responsible for the synthesis of L-tryptophan from indole and L-serine. In Corynebacterium glutamicum (strain ATCC 13032 / DSM 20300 / JCM 1318 / BCRC 11384 / CCUG 27702 / LMG 3730 / NBRC 12168 / NCIMB 10025 / NRRL B-2784 / 534), this protein is Tryptophan synthase beta chain (trpB).